Here is a 409-residue protein sequence, read N- to C-terminus: NADH-quinone oxidoreductase subunit D (409 aa).

It belongs to the complex I 49 kDa subunit family. As to quaternary structure, NDH-1 is composed of 14 different subunits. Subunits NuoB, C, D, E, F, and G constitute the peripheral sector of the complex.

Its subcellular location is the cell inner membrane. It carries out the reaction a quinone + NADH + 5 H(+)(in) = a quinol + NAD(+) + 4 H(+)(out). Its function is as follows. NDH-1 shuttles electrons from NADH, via FMN and iron-sulfur (Fe-S) centers, to quinones in the respiratory chain. The immediate electron acceptor for the enzyme in this species is believed to be ubiquinone. Couples the redox reaction to proton translocation (for every two electrons transferred, four hydrogen ions are translocated across the cytoplasmic membrane), and thus conserves the redox energy in a proton gradient. The protein is NADH-quinone oxidoreductase subunit D of Helicobacter pylori (strain P12).